A 444-amino-acid polypeptide reads, in one-letter code: Phosphoglucosamine mutase (444 aa).

Residue Ser-101 is the Phosphoserine intermediate of the active site. The Mg(2+) site is built by Ser-101, Asp-240, Asp-242, and Asp-244. Ser-101 is subject to Phosphoserine.

Belongs to the phosphohexose mutase family. It depends on Mg(2+) as a cofactor. Post-translationally, activated by phosphorylation.

The enzyme catalyses alpha-D-glucosamine 1-phosphate = D-glucosamine 6-phosphate. Its function is as follows. Catalyzes the conversion of glucosamine-6-phosphate to glucosamine-1-phosphate. The protein is Phosphoglucosamine mutase of Aeromonas hydrophila subsp. hydrophila (strain ATCC 7966 / DSM 30187 / BCRC 13018 / CCUG 14551 / JCM 1027 / KCTC 2358 / NCIMB 9240 / NCTC 8049).